Here is a 304-residue protein sequence, read N- to C-terminus: Methionyl-tRNA formyltransferase (304 aa).

109 to 112 contributes to the (6S)-5,6,7,8-tetrahydrofolate binding site; it reads SDLP.

Belongs to the Fmt family.

The enzyme catalyses L-methionyl-tRNA(fMet) + (6R)-10-formyltetrahydrofolate = N-formyl-L-methionyl-tRNA(fMet) + (6S)-5,6,7,8-tetrahydrofolate + H(+). Its function is as follows. Attaches a formyl group to the free amino group of methionyl-tRNA(fMet). The formyl group appears to play a dual role in the initiator identity of N-formylmethionyl-tRNA by promoting its recognition by IF2 and preventing the misappropriation of this tRNA by the elongation apparatus. This chain is Methionyl-tRNA formyltransferase, found in Rickettsia bellii (strain RML369-C).